The primary structure comprises 395 residues: F-box/LRR-repeat protein 12 (395 aa).

One can recognise an F-box domain in the interval 13–61; the sequence is TSIIHLPDDCLSFIFQRLDSVADHDSFGLTCHRWLNIQNISRRSLQFQC. 10 LRR repeats span residues 75–100, 101–126, 127–152, 154–177, 178–203, 226–250, 252–278, 279–304, 305–330, and 331–356; these read NPDV…SLSG, CTVL…YLDC, CFGI…SLYR, NISD…NLSY, CPLV…KISN, SCQL…NISG, SCYI…NLRM, CRTV…NLAL, CHEV…HVNR, and CRNL…YMNG.

This chain is F-box/LRR-repeat protein 12 (FBL12), found in Arabidopsis thaliana (Mouse-ear cress).